The primary structure comprises 188 residues: Crossover junction endodeoxyribonuclease RuvC (188 aa).

Residues Asp-7, Glu-68, and Asp-141 contribute to the active site. Positions 7, 68, and 141 each coordinate Mg(2+).

This sequence belongs to the RuvC family. In terms of assembly, homodimer which binds Holliday junction (HJ) DNA. The HJ becomes 2-fold symmetrical on binding to RuvC with unstacked arms; it has a different conformation from HJ DNA in complex with RuvA. In the full resolvosome a probable DNA-RuvA(4)-RuvB(12)-RuvC(2) complex forms which resolves the HJ. Mg(2+) is required as a cofactor.

Its subcellular location is the cytoplasm. It catalyses the reaction Endonucleolytic cleavage at a junction such as a reciprocal single-stranded crossover between two homologous DNA duplexes (Holliday junction).. Its function is as follows. The RuvA-RuvB-RuvC complex processes Holliday junction (HJ) DNA during genetic recombination and DNA repair. Endonuclease that resolves HJ intermediates. Cleaves cruciform DNA by making single-stranded nicks across the HJ at symmetrical positions within the homologous arms, yielding a 5'-phosphate and a 3'-hydroxyl group; requires a central core of homology in the junction. The consensus cleavage sequence is 5'-(A/T)TT(C/G)-3'. Cleavage occurs on the 3'-side of the TT dinucleotide at the point of strand exchange. HJ branch migration catalyzed by RuvA-RuvB allows RuvC to scan DNA until it finds its consensus sequence, where it cleaves and resolves the cruciform DNA. This is Crossover junction endodeoxyribonuclease RuvC from Mycobacterium avium (strain 104).